Consider the following 83-residue polypeptide: Cytochrome b559 subunit alpha (83 aa).

A helical membrane pass occupies residues 21–35 (VIHSITIPSLFIAGW). His23 is a binding site for heme.

This sequence belongs to the PsbE/PsbF family. As to quaternary structure, heterodimer of an alpha subunit and a beta subunit. PSII is composed of 1 copy each of membrane proteins PsbA, PsbB, PsbC, PsbD, PsbE, PsbF, PsbH, PsbI, PsbJ, PsbK, PsbL, PsbM, PsbT, PsbX, PsbY, PsbZ, Psb30/Ycf12, at least 3 peripheral proteins of the oxygen-evolving complex and a large number of cofactors. It forms dimeric complexes. Requires heme b as cofactor.

Its subcellular location is the plastid. The protein resides in the chloroplast thylakoid membrane. Its function is as follows. This b-type cytochrome is tightly associated with the reaction center of photosystem II (PSII). PSII is a light-driven water:plastoquinone oxidoreductase that uses light energy to abstract electrons from H(2)O, generating O(2) and a proton gradient subsequently used for ATP formation. It consists of a core antenna complex that captures photons, and an electron transfer chain that converts photonic excitation into a charge separation. The protein is Cytochrome b559 subunit alpha of Psilotum nudum (Whisk fern).